A 269-amino-acid chain; its full sequence is Formamidopyrimidine-DNA glycosylase (269 aa).

P2 serves as the catalytic Schiff-base intermediate with DNA. E3 serves as the catalytic Proton donor. K57 (proton donor; for beta-elimination activity) is an active-site residue. Residues H90, R109, and K150 each coordinate DNA. The FPG-type zinc-finger motif lies at 235 to 269; the sequence is QVYGRKGEPCRVCGTPIVATKHAQRATFYCRHCQK. The active-site Proton donor; for delta-elimination activity is R259.

The protein belongs to the FPG family. Monomer. Requires Zn(2+) as cofactor.

It catalyses the reaction Hydrolysis of DNA containing ring-opened 7-methylguanine residues, releasing 2,6-diamino-4-hydroxy-5-(N-methyl)formamidopyrimidine.. It carries out the reaction 2'-deoxyribonucleotide-(2'-deoxyribose 5'-phosphate)-2'-deoxyribonucleotide-DNA = a 3'-end 2'-deoxyribonucleotide-(2,3-dehydro-2,3-deoxyribose 5'-phosphate)-DNA + a 5'-end 5'-phospho-2'-deoxyribonucleoside-DNA + H(+). Its function is as follows. Involved in base excision repair of DNA damaged by oxidation or by mutagenic agents. Acts as a DNA glycosylase that recognizes and removes damaged bases. Has a preference for oxidized purines, such as 7,8-dihydro-8-oxoguanine (8-oxoG). Has AP (apurinic/apyrimidinic) lyase activity and introduces nicks in the DNA strand. Cleaves the DNA backbone by beta-delta elimination to generate a single-strand break at the site of the removed base with both 3'- and 5'-phosphates. The sequence is that of Formamidopyrimidine-DNA glycosylase from Salmonella heidelberg (strain SL476).